A 141-amino-acid polypeptide reads, in one-letter code: VLSAADKGHVKAIWGKVGGHAGEYAAEGLERTFHSFPTTKTYFPHFDLSHGSAQIQAHGKKIADALGQAVEHIDDLPGTLSKLSDLHAHKLRVDPVNFKLLSHCLLVTFAAHLGDAFTPEVHASLDKFLAAVSTVLTSKYR.

Residues V1–R141 form the Globin domain. Phosphoserine is present on S3. N6-succinyllysine occurs at positions 7 and 11. K16 is subject to N6-acetyllysine; alternate. K16 is modified (N6-succinyllysine; alternate). Y24 carries the post-translational modification Phosphotyrosine. S35 is modified (phosphoserine). K40 carries the N6-succinyllysine modification. S49 bears the Phosphoserine mark. Residue H58 participates in O2 binding. A heme b-binding site is contributed by H87. Phosphoserine is present on S102. T108 carries the post-translational modification Phosphothreonine. Position 124 is a phosphoserine (S124). Phosphothreonine occurs at positions 134 and 137. The residue at position 138 (S138) is a Phosphoserine.

This sequence belongs to the globin family. In terms of assembly, heterotetramer of two alpha chains and two beta chains. As to expression, red blood cells.

Functionally, involved in oxygen transport from the lung to the various peripheral tissues. In terms of biological role, hemopressin acts as an antagonist peptide of the cannabinoid receptor CNR1. Hemopressin-binding efficiently blocks cannabinoid receptor CNR1 and subsequent signaling. In Macropus giganteus (Eastern gray kangaroo), this protein is Hemoglobin subunit alpha (HBA).